A 121-amino-acid polypeptide reads, in one-letter code: Large ribosomal subunit protein bL12 (121 aa).

It belongs to the bacterial ribosomal protein bL12 family. In terms of assembly, homodimer. Part of the ribosomal stalk of the 50S ribosomal subunit. Forms a multimeric L10(L12)X complex, where L10 forms an elongated spine to which 2 to 4 L12 dimers bind in a sequential fashion. Binds GTP-bound translation factors.

Its function is as follows. Forms part of the ribosomal stalk which helps the ribosome interact with GTP-bound translation factors. Is thus essential for accurate translation. This Pectobacterium carotovorum subsp. carotovorum (strain PC1) protein is Large ribosomal subunit protein bL12.